The primary structure comprises 308 residues: MKWIEVQVTTTQEAEEAVTNIMHELGAGGVVIKNPNDVKLLAQSDNWDYLDSSLFEEEGNIKVFAYFPIASDTTDKINILKDRIVELKSFGIDIGNFDVKVSEVDEADWENNWKQYYKPLKIGKKIVIKPSWEEYVSQGEEIIIELDPGMAFGTGTHETTKMCLEFLEDIVMPESIVFDVGCGSGILSITSSKLGAKEVYAADIDEVSVEVARQNVELNNLQNVKVFKSDLLSEFRGKADIIVANIIADVIIKLSAEVPKYLKEEGLFLASGIIKSRKEEVLQKVEEFFEVLQIREEGEWCAILSRKK.

The S-adenosyl-L-methionine site is built by Thr160, Gly181, Asp203, and Asn245.

Belongs to the methyltransferase superfamily. PrmA family.

The protein resides in the cytoplasm. It catalyses the reaction L-lysyl-[protein] + 3 S-adenosyl-L-methionine = N(6),N(6),N(6)-trimethyl-L-lysyl-[protein] + 3 S-adenosyl-L-homocysteine + 3 H(+). Its function is as follows. Methylates ribosomal protein L11. This chain is Ribosomal protein L11 methyltransferase, found in Thermoanaerobacter pseudethanolicus (strain ATCC 33223 / 39E) (Clostridium thermohydrosulfuricum).